Reading from the N-terminus, the 320-residue chain is Heterogeneous nuclear ribonucleoprotein A1 (320 aa).

M1 is modified (N-acetylmethionine). S2 carries the post-translational modification N-acetylserine; in Heterogeneous nuclear ribonucleoprotein A1, N-terminally processed. A Phosphoserine modification is found at S2. An N6-acetyllysine; alternate modification is found at K3. Residue K3 forms a Glycyl lysine isopeptide (Lys-Gly) (interchain with G-Cter in SUMO2); alternate linkage. S4 and S6 each carry phosphoserine. Residues S4–D94 are globular A domain. Residue K8 forms a Glycyl lysine isopeptide (Lys-Gly) (interchain with G-Cter in SUMO2) linkage. 2 RRM domains span residues R14–R97 and K105–Q184. S22 is modified (phosphoserine). K78 participates in a covalent cross-link: Glycyl lysine isopeptide (Lys-Gly) (interchain with G-Cter in SUMO2). The tract at residues S95–E185 is globular B domain. K113 participates in a covalent cross-link: Glycyl lysine isopeptide (Lys-Gly) (interchain with G-Cter in SUMO). Glycyl lysine isopeptide (Lys-Gly) (interchain with G-Cter in SUMO2) cross-links involve residues K179 and K183. The segment at S182–F216 is disordered. The residue at position 192 (S192) is a Phosphoserine; by MKNK2. Position 194 is an asymmetric dimethylarginine; alternate (R194). Dimethylated arginine; alternate is present on R194. R194 bears the Omega-N-methylarginine; alternate mark. Positions S197–F216 are enriched in gly residues. At S199 the chain carries Phosphoserine. R206, R218, R225, and R232 each carry asymmetric dimethylarginine; alternate. Position 206 is a dimethylated arginine; alternate (R206). Omega-N-methylarginine; alternate occurs at positions 206, 218, 225, and 232. The segment at R218–S240 is RNA-binding RGG-box. R225 carries the dimethylated arginine; alternate modification. The segment at N268–Y305 is nuclear targeting sequence. Residues G274 to F320 form a disordered region. Gly residues predominate over residues M276 to Q294. An Omega-N-methylarginine modification is found at R284. A Phosphoserine modification is found at S285. An N6-acetyllysine; alternate modification is found at K298. A Glycyl lysine isopeptide (Lys-Gly) (interchain with G-Cter in SUMO2); alternate cross-link involves residue K298. Position 300 is an omega-N-methylarginine (R300). Residues S308–F320 show a composition bias toward low complexity. Position 309 is a phosphoserine (S309). Residues S310, S311, and S312 each carry the phosphoserine; by MKNK2 modification. Residues S313 and S316 each carry the phosphoserine modification. R318 carries the omega-N-methylarginine modification.

As to quaternary structure, identified in the spliceosome C complex. Identified in a IGF2BP1-dependent mRNP granule complex containing untranslated mRNAs. Interacts with SEPT6. Interacts with C9orf72. Interacts with KHDRBS1. Interacts with UBQLN2. Interacts with PPIA/CYPA. Sumoylated.

The protein localises to the nucleus. It is found in the cytoplasm. Functionally, involved in the packaging of pre-mRNA into hnRNP particles, transport of poly(A) mRNA from the nucleus to the cytoplasm and modulation of splice site selection. Plays a role in the splicing of pyruvate kinase PKM by binding repressively to sequences flanking PKM exon 9, inhibiting exon 9 inclusion and resulting in exon 10 inclusion and production of the PKM M2 isoform. Binds to the IRES and thereby inhibits the translation of the apoptosis protease activating factor APAF1. May bind to specific miRNA hairpins. The chain is Heterogeneous nuclear ribonucleoprotein A1 (Hnrnpa1) from Mus musculus (Mouse).